The following is a 401-amino-acid chain: Nodal homolog 3-B (401 aa).

A signal peptide spans 1–18 (MAFLSLFLCLVFSSPLMA). Positions 19 to 274 (MPPALQGRKA…KVNGFRRLRR (256 aa)) are excised as a propeptide. 3 N-linked (GlcNAc...) asparagine glycosylation sites follow: Asn168, Asn337, and Asn344. 2 disulfide bridges follow: Cys299–Cys365 and Cys328–Cys396.

The protein belongs to the TGF-beta family. Monomer. The propeptide region interacts with bmp4 in a non-covalent manner. Expressed in the dorsal marginal region of late blastula, becoming restricted to the Spemann organizer at the early gastrula stage.

It is found in the secreted. Functionally, exhibits mesoderm-dorsalizing activity and neural-inducing activity, but lacks mesoderm-inducing activity. Regulates the expression of specific mesodermal and neural genes. Induces convergent extension movements at the embryonic midline by activating the fgf signaling pathway to induce t/bra expression in the organizer region. Acts with wnt11 to induce Spemann organizer cells and induce axis formation. The unprocessed protein antagonizes bmp-signaling. The polypeptide is Nodal homolog 3-B (Xenopus tropicalis (Western clawed frog)).